Consider the following 445-residue polypeptide: Probable histidine--tRNA ligase, cytoplasmic (445 aa).

This sequence belongs to the class-II aminoacyl-tRNA synthetase family.

The protein resides in the cytoplasm. It catalyses the reaction tRNA(His) + L-histidine + ATP = L-histidyl-tRNA(His) + AMP + diphosphate + H(+). This chain is Probable histidine--tRNA ligase, cytoplasmic, found in Antonospora locustae (Microsporidian parasite).